We begin with the raw amino-acid sequence, 66 residues long: uncharacterized protein (66 aa).

Residues Trp-32–Arg-49 traverse the membrane as a helical segment.

The protein resides in the membrane. This is an uncharacterized protein from Bacillus subtilis (strain 168).